Consider the following 252-residue polypeptide: uncharacterized protein (252 aa).

The 56-residue stretch at 3–58 (AKDRIQAIKQMVANDKKVTVSNLSGIFQVTEETIRRDLEKLEDEGFLTRTYGGAVL) folds into the HTH deoR-type domain. Positions 20–39 (VTVSNLSGIFQVTEETIRRD) form a DNA-binding region, H-T-H motif.

This is an uncharacterized protein from Escherichia coli (strain K12).